A 111-amino-acid polypeptide reads, in one-letter code: Fertilization-influencing membrane protein (111 aa).

The signal sequence occupies residues 1-23 (MKLWLWVAVGVWMLMAELGTIET). The helical transmembrane segment at 85–105 (ILVGTLVVAFFFLLFQFCLHV) threads the bilayer.

In terms of tissue distribution, testis-specific.

The protein localises to the cell membrane. It localises to the secreted. Its function is as follows. Plays a role in sperm-oocyte fusion process during fertilization. The protein is Fertilization-influencing membrane protein of Mus musculus (Mouse).